The sequence spans 289 residues: MNLLTKERGLAYVQLARIDKPIGTLLLLWPTLWALWLAAGGLPDLWTLLVFVVGVFLMRSAGCVINDYADRNFDGHVKRTAGRPLPMGKVKPREVLALFAVLALISFALVLTMNSLTIALSFAALLLAVCYPFMKRYIPIPQLVLGMAFSWSIPMAYAAQANALPLVAWLVFLANLLWTIAYDTQYAMVDRDDDLKLGLKSSAILFGRHDKRIIGVLQLATLLILLAVGQLMGLGAWYYWGLLGAAALFVYQQRLIRERQREACFQAFLNNNYAGALVFIGLVLNYLLP.

8 helical membrane passes run 21 to 40 (PIGTLLLLWPTLWALWLAAG), 95 to 115 (VLALFAVLALISFALVLTMNS), 116 to 136 (LTIALSFAALLLAVCYPFMKR), 138 to 158 (IPIPQLVLGMAFSWSIPMAYA), 161 to 181 (ANALPLVAWLVFLANLLWTIA), 213 to 233 (IIGVLQLATLLILLAVGQLMG), 236 to 256 (AWYYWGLLGAAALFVYQQRLI), and 268 to 288 (FLNNNYAGALVFIGLVLNYLL).

The protein belongs to the UbiA prenyltransferase family. Requires Mg(2+) as cofactor.

It localises to the cell inner membrane. The enzyme catalyses all-trans-octaprenyl diphosphate + 4-hydroxybenzoate = 4-hydroxy-3-(all-trans-octaprenyl)benzoate + diphosphate. The protein operates within cofactor biosynthesis; ubiquinone biosynthesis. Catalyzes the prenylation of para-hydroxybenzoate (PHB) with an all-trans polyprenyl group. Mediates the second step in the final reaction sequence of ubiquinone-8 (UQ-8) biosynthesis, which is the condensation of the polyisoprenoid side chain with PHB, generating the first membrane-bound Q intermediate 3-octaprenyl-4-hydroxybenzoate. This chain is 4-hydroxybenzoate octaprenyltransferase, found in Aeromonas salmonicida (strain A449).